We begin with the raw amino-acid sequence, 340 residues long: Beta-D-galactofuranosidase xynD (340 aa).

The signal sequence occupies residues 1–24; that stretch reads MKHHNYYPSTCLSILPFLLPLTMS. Residue Asp51 is the Proton acceptor of the active site. 2 N-linked (GlcNAc...) asparagine glycosylation sites follow: Asn96 and Asn165. The active-site Proton donor is Glu222. N-linked (GlcNAc...) asparagine glycans are attached at residues Asn302 and Asn328.

Belongs to the glycosyl hydrolase 43 family.

The protein resides in the secreted. It participates in glycan degradation. In terms of biological role, glycoside hydrolase family 43 beta-D-galactofuranosidase involved in the degradation of beta-galactofuranoside (Galf)-containing glycans such as galactomannan or O-glycans. Is not active on beta-1,5- or beta-1,6-linked beta-D-galactofuranose (Galf) residues. The protein is Beta-D-galactofuranosidase xynD of Aspergillus niger (strain ATCC MYA-4892 / CBS 513.88 / FGSC A1513).